A 189-amino-acid polypeptide reads, in one-letter code: MNIVSTLLLALAMSADAFAAAVSKGAMLHRPRIIEALRTGMIFGVIEATTPLVGWSLGRVAADYVTAWDHWIAFSILAFLGIRMTWSGLKHDGKVVEKSRSHSFILLAMTALGTSIDAMSVGVSLAFLDIDIVPVAFAIGIVTCIMVSAGVMLGRVLGSASKHTVEIIGGLILIGIGSLILYKHLYGAA.

A run of 6 helical transmembrane segments spans residues 3–23 (IVSTLLLALAMSADAFAAAVS), 41–61 (MIFGVIEATTPLVGWSLGRVA), 62–82 (ADYVTAWDHWIAFSILAFLGI), 103–123 (SFILLAMTALGTSIDAMSVGV), 132–152 (IVPVAFAIGIVTCIMVSAGVM), and 167–187 (IIGGLILIGIGSLILYKHLYG).

It belongs to the MntP (TC 9.B.29) family.

Its subcellular location is the cell inner membrane. Functionally, probably functions as a manganese efflux pump. This is Putative manganese efflux pump MntP from Methylobacillus flagellatus (strain ATCC 51484 / DSM 6875 / VKM B-1610 / KT).